Consider the following 369-residue polypeptide: C-C chemokine receptor type 9 (369 aa).

The Extracellular segment spans residues 1 to 48 (MMPTELTSLIPGMFDDFSYDSTASTDDYMNLNFSSFFCKKNNVRQFAS). N-linked (GlcNAc...) asparagine glycosylation occurs at Asn32. 2 disulfides stabilise this stretch: Cys38–Cys289 and Cys119–Cys198. The helical transmembrane segment at 49-74 (HFLPPLYWLVFIVGTLGNSLVILVYW) threads the bilayer. Residues 75–85 (YCTRVKTMTDM) lie on the Cytoplasmic side of the membrane. The helical transmembrane segment at 86-109 (FLLNLAIADLLFLATLPFWAIAAA) threads the bilayer. At 110–120 (GQWMFQTFMCK) the chain is on the extracellular side. Residues 121-150 (VVNSMYKMNFYSCVLLIMCISVDRYIAIVQ) form a helical membrane-spanning segment. The Cytoplasmic segment spans residues 151 to 159 (AMKAQVWRQ). The chain crosses the membrane as a helical span at residues 160–185 (KRLLYSKMVCITIWVMAAVLCTPEIL). The Extracellular portion of the chain corresponds to 186–208 (YSQVSGESGIATCTMVYPKDKNA). A helical membrane pass occupies residues 209–243 (KLKSAVLILKVTLGFFLPFMVMAFCYTIIIHTLVQ). Residues 244–248 (AKKSS) are Cytoplasmic-facing. A helical membrane pass occupies residues 249–283 (KHKALKVTITVLTVFIMSQFPYNSILVVQAVDAYA). At 284–290 (MFISNCT) the chain is on the extracellular side. Residues 291 to 321 (ISTNIDICFQVTQTIAFFHSCLNPVLYVFVG) form a helical membrane-spanning segment. Residues 322 to 369 (ERFRRDLVKTLKNLGCISQAQWVSFTRREGSLKLSSMLLETTSGALSL) are Cytoplasmic-facing.

It belongs to the G-protein coupled receptor 1 family. Highly expressed in the thymus and low in lymph nodes and spleen.

It localises to the cell membrane. Functionally, receptor for chemokine SCYA25/TECK. Subsequently transduces a signal by increasing the intracellular calcium ions level. The protein is C-C chemokine receptor type 9 (Ccr9) of Mus musculus (Mouse).